Here is a 62-residue protein sequence, read N- to C-terminus: Large ribosomal subunit protein uL29 (62 aa).

Belongs to the universal ribosomal protein uL29 family.

The protein is Large ribosomal subunit protein uL29 of Enterococcus faecalis (strain ATCC 700802 / V583).